A 451-amino-acid polypeptide reads, in one-letter code: Phosphoglucosamine mutase (451 aa).

Serine 103 (phosphoserine intermediate) is an active-site residue. 4 residues coordinate Mg(2+): serine 103, aspartate 243, aspartate 245, and aspartate 247. Serine 103 bears the Phosphoserine mark.

This sequence belongs to the phosphohexose mutase family. Mg(2+) is required as a cofactor. In terms of processing, activated by phosphorylation.

It catalyses the reaction alpha-D-glucosamine 1-phosphate = D-glucosamine 6-phosphate. Its function is as follows. Catalyzes the conversion of glucosamine-6-phosphate to glucosamine-1-phosphate. In Levilactobacillus brevis (strain ATCC 367 / BCRC 12310 / CIP 105137 / JCM 1170 / LMG 11437 / NCIMB 947 / NCTC 947) (Lactobacillus brevis), this protein is Phosphoglucosamine mutase.